The sequence spans 405 residues: Potassium channel subfamily K member 18 (405 aa).

A helical transmembrane segment spans residues 43 to 63 (LPGLCFLCCLVTYALVGAALF). An N-linked (GlcNAc...) asparagine glycan is attached at asparagine 94. Positions 125–151 (FLSALFFCCTVFSTVGYGHMYPVTRLG) form an intramembrane region, pore-forming. Residues threonine 138, valine 139, glycine 140, and tyrosine 141 each contribute to the K(+) site. Residues 138–143 (TVGYGH) form a selectivity filter 1 region. Residues 153–173 (FLCMLYALFGIPLMFLVLTDI) form a helical membrane-spanning segment. An interaction with calcineurin region spans residues 221–226 (PQIVID). Residues 272 to 277 (RSNSCP) form an interaction with YWHAH region. Serine 275 and serine 287 each carry phosphoserine. The chain crosses the membrane as a helical span at residues 304 to 324 (IPLPVIALVIFAYISCAAAIL). Residues 337–351 (FYFCFVTLTTIGFGD) constitute an intramembrane region (pore-forming). Positions 346–351 (TIGFGD) are selectivity filter 2. Residues 358-378 (HFFLFFSIYIIVGMEILFIAF) traverse the membrane as a helical segment.

The protein belongs to the two pore domain potassium channel (TC 1.A.1.8) family. In terms of assembly, homodimer. Heterodimer with KCNK2. Heterodimer with KCNK10. Interacts with calcineurin. Interacts with YWHAH, in a phosphorylation-dependent manner. Post-translationally, phosphorylation of Ser-275 is required for the binding of 14-3-3eta/YWHAH. Calcineurin-mediated dephosphorylation of Ser-287 enhances channel activity. N-glycosylated.

The protein localises to the cell membrane. It catalyses the reaction K(+)(in) = K(+)(out). With respect to regulation, activated by volatile anesthetics, such as isoflurane and inhibited by local anesthetics such as bupivacaine and lidocaine. Inhibited by extracellular acidic pH. Inhibited by Zn(2+) ions. K(+) channel that conducts outward and inward rectifying currents at depolarized and hyperpolarized membrane potentials, respectively. The outward rectifying currents are voltage-dependent, coupled to K(+) electrochemical gradient across the membrane, whereas the inward currents can be induced in response to activation of Ca(2+)-mobilizing receptors. Homo- and heterodimerizes to form functional channels with distinct regulatory and gating properties. In trigeminal ganglia sensory neurons, the heterodimers of KCNK18/TRESK and KCNK2/TREK-1 or KCNK10/TREK-2 inhibit neuronal firing and neurogenic inflammation by stabilizing the resting membrane potential at K(+) equilibrium potential as well as by regulating the threshold of action potentials and the spike frequency. In thymocytes, conducts K(+) currents upon T cell receptor (TCR) signaling leading to sustained Ca(2+) influx and NF-kappa-B activation, FOXP3 transcription and positive selection of regulatory T cell (Treg) progenitor subsets. Appears to mediate the analgesics effects of hydroxy-alpha-sanshool, a metabolite naturally present in Schezuan pepper and other Xanthoxylum plants. The protein is Potassium channel subfamily K member 18 (Kcnk18) of Rattus norvegicus (Rat).